The chain runs to 705 residues: Zinc finger protein 770 (705 aa).

Lysine 16 is covalently cross-linked (Glycyl lysine isopeptide (Lys-Gly) (interchain with G-Cter in SUMO2)). C2H2-type zinc fingers lie at residues tyrosine 31 to histidine 53, phenylalanine 59 to histidine 81, and phenylalanine 85 to histidine 107. Residues lysine 116, lysine 124, and lysine 149 each participate in a glycyl lysine isopeptide (Lys-Gly) (interchain with G-Cter in SUMO2) cross-link. 3 consecutive C2H2-type zinc fingers follow at residues histidine 164–histidine 186, phenylalanine 192–histidine 214, and phenylalanine 220–histidine 242. Lysine 266 participates in a covalent cross-link: Glycyl lysine isopeptide (Lys-Gly) (interchain with G-Cter in SUMO2). Residues phenylalanine 298–arginine 322 form a C2H2-type 7; degenerate zinc finger. 4 C2H2-type zinc fingers span residues cysteine 485–histidine 507, phenylalanine 513–histidine 535, tyrosine 640–histidine 662, and phenylalanine 668–histidine 690. Lysine 698 participates in a covalent cross-link: Glycyl lysine isopeptide (Lys-Gly) (interchain with G-Cter in SUMO2).

The protein belongs to the krueppel C2H2-type zinc-finger protein family.

It localises to the nucleus. Functionally, may be involved in transcriptional regulation. This Mus musculus (Mouse) protein is Zinc finger protein 770 (Znf770).